A 305-amino-acid polypeptide reads, in one-letter code: Thymidylate synthase (305 aa).

DUMP contacts are provided by residues Arg-26 and 160-161 (RR). Cys-180 serves as the catalytic Nucleophile. DUMP contacts are provided by residues 207-210 (RSCD), Asn-218, and 248-250 (HLY). (6R)-5,10-methylene-5,6,7,8-tetrahydrofolate is bound at residue Asp-210. A (6R)-5,10-methylene-5,6,7,8-tetrahydrofolate-binding site is contributed by Ala-304.

Belongs to the thymidylate synthase family. Bacterial-type ThyA subfamily. As to quaternary structure, homodimer.

It localises to the cytoplasm. It catalyses the reaction dUMP + (6R)-5,10-methylene-5,6,7,8-tetrahydrofolate = 7,8-dihydrofolate + dTMP. Its pathway is pyrimidine metabolism; dTTP biosynthesis. Its function is as follows. Catalyzes the reductive methylation of 2'-deoxyuridine-5'-monophosphate (dUMP) to 2'-deoxythymidine-5'-monophosphate (dTMP) while utilizing 5,10-methylenetetrahydrofolate (mTHF) as the methyl donor and reductant in the reaction, yielding dihydrofolate (DHF) as a by-product. This enzymatic reaction provides an intracellular de novo source of dTMP, an essential precursor for DNA biosynthesis. This chain is Thymidylate synthase, found in Sinorhizobium fredii (strain NBRC 101917 / NGR234).